The primary structure comprises 776 residues: A-type ATP synthase subunit A (776 aa).

This sequence belongs to the ATPase alpha/beta chains family. As to quaternary structure, has multiple subunits with at least A(3), B(3), C, D, E, F, H, I and proteolipid K(x). In terms of processing, this protein undergoes a protein self splicing that involves a post-translational excision of the VDE intervening region (intein) followed by peptide ligation.

Its subcellular location is the cell membrane. It carries out the reaction ATP + H2O + 4 H(+)(in) = ADP + phosphate + 5 H(+)(out). Functionally, component of the A-type ATP synthase that produces ATP from ADP in the presence of a proton gradient across the membrane. The A chain is the catalytic subunit. In Thermoplasma volcanium (strain ATCC 51530 / DSM 4299 / JCM 9571 / NBRC 15438 / GSS1), this protein is A-type ATP synthase subunit A.